The primary structure comprises 90 residues: CRISPR-associated endonuclease Cas2 2 (90 aa).

Mg(2+) is bound at residue Asp-11.

This sequence belongs to the CRISPR-associated endoribonuclease Cas2 protein family. As to quaternary structure, homodimer, forms a heterotetramer with a Cas1 homodimer. Mn(2+) is required as a cofactor. It depends on Mg(2+) as a cofactor.

With respect to regulation, inhibited by EDTA and at pH 6.0. Its function is as follows. CRISPR (clustered regularly interspaced short palindromic repeat), is an adaptive immune system that provides protection against mobile genetic elements (viruses, transposable elements and conjugative plasmids). CRISPR clusters contain sequences complementary to antecedent mobile elements and target invading nucleic acids. CRISPR clusters are transcribed and processed into CRISPR RNA (crRNA). Involved in the integration of spacer DNA into the CRISPR cassette. Functions as a dsDNA endonuclease and as a weak ssRNase. In Thermus thermophilus (strain ATCC BAA-163 / DSM 7039 / HB27), this protein is CRISPR-associated endonuclease Cas2 2 (cas2b).